Here is a 435-residue protein sequence, read N- to C-terminus: UDP-N-acetylmuramate--L-alanine ligase (435 aa).

108–114 serves as a coordination point for ATP; sequence GSHGKTS.

It belongs to the MurCDEF family.

The protein resides in the cytoplasm. It catalyses the reaction UDP-N-acetyl-alpha-D-muramate + L-alanine + ATP = UDP-N-acetyl-alpha-D-muramoyl-L-alanine + ADP + phosphate + H(+). It functions in the pathway cell wall biogenesis; peptidoglycan biosynthesis. Its function is as follows. Cell wall formation. The protein is UDP-N-acetylmuramate--L-alanine ligase of Shouchella clausii (strain KSM-K16) (Alkalihalobacillus clausii).